Reading from the N-terminus, the 280-residue chain is Putative pyruvate, phosphate dikinase regulatory protein (280 aa).

G152–S159 is an ADP binding site.

This sequence belongs to the pyruvate, phosphate/water dikinase regulatory protein family. PDRP subfamily.

It carries out the reaction N(tele)-phospho-L-histidyl/L-threonyl-[pyruvate, phosphate dikinase] + ADP = N(tele)-phospho-L-histidyl/O-phospho-L-threonyl-[pyruvate, phosphate dikinase] + AMP + H(+). The enzyme catalyses N(tele)-phospho-L-histidyl/O-phospho-L-threonyl-[pyruvate, phosphate dikinase] + phosphate + H(+) = N(tele)-phospho-L-histidyl/L-threonyl-[pyruvate, phosphate dikinase] + diphosphate. Its function is as follows. Bifunctional serine/threonine kinase and phosphorylase involved in the regulation of the pyruvate, phosphate dikinase (PPDK) by catalyzing its phosphorylation/dephosphorylation. The protein is Putative pyruvate, phosphate dikinase regulatory protein of Anaplasma phagocytophilum (strain HZ).